A 105-amino-acid polypeptide reads, in one-letter code: Probable tetrachloroethene reductive dehalogenase membrane anchor protein (105 aa).

3 helical membrane-spanning segments follow: residues isoleucine 3–isoleucine 23, isoleucine 35–glycine 55, and alanine 66–tyrosine 86.

The protein belongs to the PceB family.

The protein localises to the cell membrane. Its function is as follows. May act as a membrane anchor for the tetrachloroethene reductive dehalogenase PceA. In Desulfitobacterium hafniense (Desulfitobacterium frappieri), this protein is Probable tetrachloroethene reductive dehalogenase membrane anchor protein.